Reading from the N-terminus, the 363-residue chain is S-adenosylmethionine:tRNA ribosyltransferase-isomerase (363 aa).

It belongs to the QueA family. Monomer.

Its subcellular location is the cytoplasm. The enzyme catalyses 7-aminomethyl-7-carbaguanosine(34) in tRNA + S-adenosyl-L-methionine = epoxyqueuosine(34) in tRNA + adenine + L-methionine + 2 H(+). It functions in the pathway tRNA modification; tRNA-queuosine biosynthesis. In terms of biological role, transfers and isomerizes the ribose moiety from AdoMet to the 7-aminomethyl group of 7-deazaguanine (preQ1-tRNA) to give epoxyqueuosine (oQ-tRNA). This chain is S-adenosylmethionine:tRNA ribosyltransferase-isomerase, found in Haemophilus influenzae (strain 86-028NP).